Here is a 392-residue protein sequence, read N- to C-terminus: Small ribosomal subunit protein bS1 (392 aa).

4 S1 motif domains span residues G16–R90, D108–K173, G194–K262, and D279–K348. A disordered region spans residues A361–G380.

Belongs to the bacterial ribosomal protein bS1 family.

In terms of biological role, binds mRNA; thus facilitating recognition of the initiation point. It is needed to translate mRNA with a short Shine-Dalgarno (SD) purine-rich sequence. This is Small ribosomal subunit protein bS1 (rpsA) from Staphylococcus epidermidis (strain ATCC 35984 / DSM 28319 / BCRC 17069 / CCUG 31568 / BM 3577 / RP62A).